Here is a 307-residue protein sequence, read N- to C-terminus: Metapyrocatechase (307 aa).

VOC domains are found at residues 7 to 122 and 150 to 269; these read RPGH…LYAD and RFDH…VFCG. 3 residues coordinate Fe cation: His-153, His-214, and Glu-265.

It belongs to the extradiol ring-cleavage dioxygenase family. Homotetramer. The cofactor is Fe(2+).

The enzyme catalyses catechol + O2 = (2Z,4E)-2-hydroxy-6-oxohexa-2,4-dienoate + H(+). It functions in the pathway xenobiotic degradation; toluene degradation. The protein is Metapyrocatechase (bztE) of Pseudomonas aeruginosa.